A 347-amino-acid chain; its full sequence is MRGDSERIAVGVVGTGGMGGMHAENLHFRVPGARLVAVADLDTRRAGGVAERSGAEVFEDGFDLIRSDRVEAVVIASPDPTHAPLVLECLKNEKPVLCEKPLADSADAARKVVEAEVELGRKLVQVGFMRRYDPQHVAVKEAVASGAVGAPVLFRGWHRNADIEPGITSEWVVINATIHDIDSARWFIEEEIEEVYVRGMNTAPKLGANVWDLQLIQFTTAGGRLGSIETNVVSGYGYEVGVEIVGERGTVQVPPLSGAIVRRGFAASQRIEDGWLARFHAAYVIEMQGWVGALLRGEAPAGPDAWDGYASLVVADACIASLRSGAPQKVETLEPPTLYRRDVEVTG.

It belongs to the Gfo/Idh/MocA family. In terms of assembly, homotetramer.

The catalysed reaction is myo-inositol + NAD(+) = scyllo-inosose + NADH + H(+). Functionally, involved in the oxidation of myo-inositol (MI) to 2-keto-myo-inositol (2KMI or 2-inosose). In Rubrobacter xylanophilus (strain DSM 9941 / JCM 11954 / NBRC 16129 / PRD-1), this protein is Inositol 2-dehydrogenase.